The chain runs to 191 residues: Large ribosomal subunit protein bL25 (191 aa).

Belongs to the bacterial ribosomal protein bL25 family. CTC subfamily. Part of the 50S ribosomal subunit; part of the 5S rRNA/L5/L18/L25 subcomplex. Contacts the 5S rRNA. Binds to the 5S rRNA independently of L5 and L18.

Functionally, this is one of the proteins that binds to the 5S RNA in the ribosome where it forms part of the central protuberance. In Nitratidesulfovibrio vulgaris (strain DSM 19637 / Miyazaki F) (Desulfovibrio vulgaris), this protein is Large ribosomal subunit protein bL25.